The chain runs to 449 residues: Heterogeneous nuclear ribonucleoprotein H2 (449 aa).

Methionine 1 carries the N-acetylmethionine modification. Methionine 2 is subject to N-acetylmethionine; in Heterogeneous nuclear ribonucleoprotein H2, N-terminally processed. The region spanning 11–90 is the RRM 1 domain; sequence FVVKVRGLPW…RYVEVFKSNS (80 aa). Serine 23 carries the post-translational modification Phosphoserine. A Glycyl lysine isopeptide (Lys-Gly) (interchain with G-Cter in SUMO2) cross-link involves residue lysine 35. Serine 54 and serine 63 each carry phosphoserine. Lysine 87 is covalently cross-linked (Glycyl lysine isopeptide (Lys-Gly) (interchain with G-Cter in SUMO2)). Serine 90 bears the Phosphoserine mark. Residue lysine 98 forms a Glycyl lysine isopeptide (Lys-Gly) (interchain with G-Cter in SUMO2) linkage. The 78-residue stretch at 111–188 folds into the RRM 2 domain; sequence GFVRLRGLPF…RYIEIFKSSR (78 aa). Dimethylated arginine; alternate is present on arginine 233. Position 233 is an omega-N-methylarginine; alternate (arginine 233). One copy of the 1-1 repeat lies at 234 to 249; it reads GAYGGGYGGYDDYGGY. Positions 234 to 433 are 2 X 16 AA Gly-rich approximate repeats; the sequence is GAYGGGYGGY…YGGQSSMSGY (200 aa). Tyrosine 246 is modified (phosphotyrosine). Positions 289 to 364 constitute an RRM 3 domain; sequence HCVHMRGLPY…RYVELFLNST (76 aa). At serine 310 the chain carries Phosphoserine. A run of 3 repeats spans residues 354 to 372, 374 to 392, and 418 to 433. Residues 354 to 392 form a 2 X 19 AA perfect repeats region; sequence HRYVELFLNSTAGTSGGAYDHSYVELFLNSTAGASGGAY.

As to quaternary structure, component of a ribonucleoprotein complex containing mRNAs and RNA-binding proteins including DDX5, HNRNPH2 and SRSF1 as well as splicing regulator ARVCF. Interacts with TXNL4/DIM1. Expressed ubiquitously.

The protein localises to the nucleus. It is found in the nucleoplasm. Functionally, this protein is a component of the heterogeneous nuclear ribonucleoprotein (hnRNP) complexes which provide the substrate for the processing events that pre-mRNAs undergo before becoming functional, translatable mRNAs in the cytoplasm. Binds poly(RG). In Homo sapiens (Human), this protein is Heterogeneous nuclear ribonucleoprotein H2 (HNRNPH2).